The primary structure comprises 326 residues: GATA zinc finger domain-containing protein 21 (326 aa).

2 disordered regions span residues 1-102 (MFRN…NNNN) and 145-238 (QNQS…TPER). Composition is skewed to low complexity over residues 17–102 (NTNL…NNNN) and 148–164 (SSSSSSGASGSRSGSSA). Polar residues predominate over residues 165 to 189 (LNSINNNNYSPTTSSLNRVRNQYNQ). Residues 193–218 (DEEDDDYDNGAEDGFDYDGDDNEDGS) show a composition bias toward acidic residues. A GATA-type zinc finger spans residues 239-266 (CSNCKITHSSYWRRITVNGQKLDFCNAC). The interval 277 to 326 (IKESKQRHSIQNIMNQNQEEEEEEREEEEEEEEEEDEEFETLEEEEEDDE) is disordered. Residues 294-326 (QEEEEEEREEEEEEEEEEDEEFETLEEEEEDDE) are compositionally biased toward acidic residues.

The polypeptide is GATA zinc finger domain-containing protein 21 (gtaU) (Dictyostelium discoideum (Social amoeba)).